The following is a 322-amino-acid chain: HPr kinase/phosphorylase (322 aa).

Residues His153 and Lys174 contribute to the active site. Residue 168-175 participates in ATP binding; it reads GRSGLGKS. A Mg(2+)-binding site is contributed by Ser175. Asp192 acts as the Proton acceptor; for phosphorylation activity. Proton donor; for dephosphorylation activity in catalysis. Positions 217-226 are important for the catalytic mechanism of both phosphorylation and dephosphorylation; the sequence is MEIRGLGVVD. Mg(2+) is bound at residue Glu218. Arg259 is a catalytic residue. The important for the catalytic mechanism of dephosphorylation stretch occupies residues 280 to 285; that stretch reads PIFPGK.

Belongs to the HPrK/P family. As to quaternary structure, homohexamer. Requires Mg(2+) as cofactor.

It catalyses the reaction [HPr protein]-L-serine + ATP = [HPr protein]-O-phospho-L-serine + ADP + H(+). The enzyme catalyses [HPr protein]-O-phospho-L-serine + phosphate + H(+) = [HPr protein]-L-serine + diphosphate. Catalyzes the ATP- as well as the pyrophosphate-dependent phosphorylation of a specific serine residue in HPr, a phosphocarrier protein of the phosphoenolpyruvate-dependent sugar phosphotransferase system (PTS). HprK/P also catalyzes the pyrophosphate-producing, inorganic phosphate-dependent dephosphorylation (phosphorolysis) of seryl-phosphorylated HPr (P-Ser-HPr). In Chlorobium phaeobacteroides (strain DSM 266 / SMG 266 / 2430), this protein is HPr kinase/phosphorylase.